The chain runs to 127 residues: MARVKRAVNAHKKRRTVLERAKGYRGQRSRLYRKAKEQLLHSFNYNYRDRKARKGDFRKLWIQRINIAVRNEGITYNRFIQGLRLAGIELDRRALAELAVNDPDTFKTIVEQAKAALPEDVNAPVNA.

It belongs to the bacterial ribosomal protein bL20 family.

In terms of biological role, binds directly to 23S ribosomal RNA and is necessary for the in vitro assembly process of the 50S ribosomal subunit. It is not involved in the protein synthesizing functions of that subunit. This chain is Large ribosomal subunit protein bL20, found in Bifidobacterium animalis subsp. lactis (strain AD011).